The following is an 82-amino-acid chain: UPF0213 protein SSP2268 (82 aa).

The GIY-YIG domain occupies 2 to 77 (DKHYIYIVKC…KTFSRQKKLK (76 aa)).

This sequence belongs to the UPF0213 family.

The polypeptide is UPF0213 protein SSP2268 (Staphylococcus saprophyticus subsp. saprophyticus (strain ATCC 15305 / DSM 20229 / NCIMB 8711 / NCTC 7292 / S-41)).